Here is a 441-residue protein sequence, read N- to C-terminus: UDP-N-acetylglucosamine--peptide N-acetylglucosaminyltransferase stabilizing protein GtfB (441 aa).

Belongs to the GtfB family. Forms a heterotetramer with 2 subunits each of GtfA and GtfB. Part of the accessory SecA2/SecY2 protein translocation apparatus.

The protein localises to the cell membrane. It functions in the pathway protein modification; protein glycosylation. Required for polymorphic O-glycosylation of the serine-rich repeat protein (SRRP) in this bacteria. A stabilizing protein that is part of the accessory SecA2/SecY2 system specifically required to export serine-rich repeat cell wall proteins encoded in the same operon. The GtfA-GtfB complex adds GlcNAc from UDP-GlcNAc to the substrate protein, attaching the first sugar residue. Stabilizes the glycosylation activity of GtfA. Has no N-acetylglucosaminyl transferase activity on its own. The sequence is that of UDP-N-acetylglucosamine--peptide N-acetylglucosaminyltransferase stabilizing protein GtfB from Limosilactobacillus reuteri subsp. suis (strain ATCC 53608 / LMG 31752 / 1063) (Lactobacillus reuteri).